Consider the following 224-residue polypeptide: Fibronectin type III domain-containing protein 9 (224 aa).

The region spanning 1-101 (MNIEVGNISY…FHTLDKSPLA (101 aa)) is the Fibronectin type-III domain. The chain crosses the membrane as a helical span at residues 113-133 (LWVLMAILLACFTAVLAFICL). Residues 175 to 224 (LQGLPLVEMPRKNSRDGAELDPEANQDAPDAGALQRGGGDPPAILPHCGE) are disordered. A compositionally biased stretch (basic and acidic residues) spans 183–192 (MPRKNSRDGA).

It localises to the membrane. The sequence is that of Fibronectin type III domain-containing protein 9 (FNDC9) from Homo sapiens (Human).